The primary structure comprises 672 residues: MEETCSESPKESNIISFIWHKLLKRVPPPIMICLFFLLLQIFVISVVSQCPPGLTPLFSNSNFNQPLTCTPQDACSCYSSSGSSRFGTICQYASTYNNYICCYSTNTQCGSNSSPQVSASGQVVTCSTNTQCASGYTCNNGACCPNTNSNTCSSNGNNGCLAGQTMVNGQCYNSVNIGSACQSTQQCLGGSQCQNNICQCYSGYVNVNQQCVISNGLNCQLGTVSYNSQCITLASPGQNCQTSSQCIDNSVCMNQMCTCNNNYRLVYGYCVPITSSICQQTQTLVNNQCVLLSIVGETCIANQQCVGGAMCNSGTCQCTNGATAMYGYCISSSSSSCNSNQVSINGMCYNTVQVGGSCSFSQQCLNNAVCTNNICVSTFCSVSCSTNQVCISNQCYNYVSIGSQCVGSQQCLSNSQCISSICQCPQGTQQSNGVCTGNNNNNNQCQPNQVLINNQCYNTVSIGFQCQFPQQCLGNSQCMNSMCQCPTGSTNVNGYCQGGSNGQCNSNQVLINNQCYNTVSIGFQCQFAQQCLGNSQCLNSICQCPSGSSNVNGYCQGGSNGQCNSNQVYYNNQCYNTVPIGSQCQITQQCLGNSQCMNSFCQCPSGTTNVNNFCTTSSSSSNLCSAGQTVQLDSSNQPINCLVSTCPNNSFCQYSSSGQRYVCCRSTSGKKK.

The helical transmembrane segment at 26 to 46 threads the bilayer; that stretch reads VPPPIMICLFFLLLQIFVISV.

It is found in the membrane. In Caenorhabditis elegans, this protein is Prion-like-(Q/N-rich) domain-bearing protein 25 (pqn-25).